The following is a 315-amino-acid chain: Methionyl-tRNA formyltransferase (315 aa).

113–116 (SLLP) serves as a coordination point for (6S)-5,6,7,8-tetrahydrofolate.

Belongs to the Fmt family.

It catalyses the reaction L-methionyl-tRNA(fMet) + (6R)-10-formyltetrahydrofolate = N-formyl-L-methionyl-tRNA(fMet) + (6S)-5,6,7,8-tetrahydrofolate + H(+). Attaches a formyl group to the free amino group of methionyl-tRNA(fMet). The formyl group appears to play a dual role in the initiator identity of N-formylmethionyl-tRNA by promoting its recognition by IF2 and preventing the misappropriation of this tRNA by the elongation apparatus. The sequence is that of Methionyl-tRNA formyltransferase from Pectobacterium carotovorum subsp. carotovorum (strain PC1).